Consider the following 401-residue polypeptide: MAENAGNETKLVENENLQEDLSRLNLEDEKNELKLNEKGGVLKENDEHLECSESFKKLAEKEEAYQTLKNSYNSLKQQHSNLLGKVSGIKSTLGERLKKDSQELAQNRKRIQELEKSLGDAEEALKLSNEETVTLTAQVESLTQDITDLRQQNASLVEENQLLSTQSKQWERRARDEHEMQESLAVRLADCEEQLARETERQEQYEVEIQRHLTNQHQLEIELESTKASHTENLGELTRNWQKAMDDVTEKFASKSKEYEDLQNELDATQKRLSRVSDLEHEVKEKTLLIGKLQHEAVVLNEHLTKALCMLKDGNNAEKIDKQLISNLFVSFLTLPRADTKRFEILQLISSVLDWNDTQREQTGLQRPGSSVNNWSIPHSASSNSLFSDHSFSKRRSFHDS.

Residues 7–296 adopt a coiled-coil conformation; it reads NETKLVENEN…TLLIGKLQHE (290 aa). Residues 315-366 enclose the GRIP domain; it reads NNAEKIDKQLISNLFVSFLTLPRADTKRFEILQLISSVLDWNDTQREQTGLQ.

It localises to the golgi apparatus lumen. This chain is GRIP domain-containing protein C119.12, found in Schizosaccharomyces pombe (strain 972 / ATCC 24843) (Fission yeast).